A 380-amino-acid chain; its full sequence is Alcohol dehydrogenase 3 (380 aa).

Residues Cys-48, Thr-50, His-70, Cys-100, Cys-103, Cys-106, Cys-114, and Cys-178 each contribute to the Zn(2+) site. Thr-50 and His-70 together coordinate an alcohol. Thr-50 serves as a coordination point for NAD(+). Residues 203–208 (GLGAVG), Asp-227, Arg-232, Thr-273, Val-296, 296–298 (VGV), Phe-323, and Arg-373 contribute to the NAD(+) site.

Belongs to the zinc-containing alcohol dehydrogenase family. In terms of assembly, homodimer. Homotetramer. Zn(2+) serves as cofactor.

It is found in the cytoplasm. The enzyme catalyses a primary alcohol + NAD(+) = an aldehyde + NADH + H(+). The catalysed reaction is a secondary alcohol + NAD(+) = a ketone + NADH + H(+). This is Alcohol dehydrogenase 3 (ADH3) from Solanum tuberosum (Potato).